Reading from the N-terminus, the 373-residue chain is tRNA-specific 2-thiouridylase MnmA (373 aa).

ATP is bound by residues glycine 12 to serine 19 and methionine 38. The tract at residues asparagine 98 to aspartate 100 is interaction with target base in tRNA. The active-site Nucleophile is cysteine 103. A disulfide bridge links cysteine 103 with cysteine 200. Glycine 127 lines the ATP pocket. The interval lysine 150 to glutamine 152 is interaction with tRNA. Residue cysteine 200 is the Cysteine persulfide intermediate of the active site. An interaction with tRNA region spans residues arginine 312–tyrosine 313.

Belongs to the MnmA/TRMU family.

The protein resides in the cytoplasm. It catalyses the reaction S-sulfanyl-L-cysteinyl-[protein] + uridine(34) in tRNA + AH2 + ATP = 2-thiouridine(34) in tRNA + L-cysteinyl-[protein] + A + AMP + diphosphate + H(+). In terms of biological role, catalyzes the 2-thiolation of uridine at the wobble position (U34) of tRNA, leading to the formation of s(2)U34. The sequence is that of tRNA-specific 2-thiouridylase MnmA from Streptococcus pyogenes serotype M12 (strain MGAS2096).